The primary structure comprises 510 residues: NAD(P)H-quinone oxidoreductase subunit 2, chloroplastic (510 aa).

A run of 13 helical transmembrane segments spans residues Asp28–Ile48, Ile57–Phe77, Ile99–Ile119, Met124–Cys144, Leu149–Tyr169, Tyr183–Gly203, Pro227–Ala247, Trp295–Ile315, Met323–Asp343, Tyr354–Leu374, Ala395–Phe415, Leu418–Leu438, and Met484–Ile504.

This sequence belongs to the complex I subunit 2 family. NDH is composed of at least 16 different subunits, 5 of which are encoded in the nucleus.

It is found in the plastid. The protein resides in the chloroplast thylakoid membrane. The enzyme catalyses a plastoquinone + NADH + (n+1) H(+)(in) = a plastoquinol + NAD(+) + n H(+)(out). The catalysed reaction is a plastoquinone + NADPH + (n+1) H(+)(in) = a plastoquinol + NADP(+) + n H(+)(out). Its function is as follows. NDH shuttles electrons from NAD(P)H:plastoquinone, via FMN and iron-sulfur (Fe-S) centers, to quinones in the photosynthetic chain and possibly in a chloroplast respiratory chain. The immediate electron acceptor for the enzyme in this species is believed to be plastoquinone. Couples the redox reaction to proton translocation, and thus conserves the redox energy in a proton gradient. The polypeptide is NAD(P)H-quinone oxidoreductase subunit 2, chloroplastic (Silene latifolia (White campion)).